The following is a 619-amino-acid chain: Dihydroxy-acid dehydratase 1 (619 aa).

Aspartate 81 is a binding site for Mg(2+). A [2Fe-2S] cluster-binding site is contributed by cysteine 122. 2 residues coordinate Mg(2+): aspartate 123 and lysine 124. N6-carboxylysine is present on lysine 124. Cysteine 198 contacts [2Fe-2S] cluster. Glutamate 494 is a binding site for Mg(2+). The active-site Proton acceptor is the serine 520.

The protein belongs to the IlvD/Edd family. As to quaternary structure, homodimer. [2Fe-2S] cluster is required as a cofactor. Mg(2+) serves as cofactor.

The catalysed reaction is (2R)-2,3-dihydroxy-3-methylbutanoate = 3-methyl-2-oxobutanoate + H2O. It carries out the reaction (2R,3R)-2,3-dihydroxy-3-methylpentanoate = (S)-3-methyl-2-oxopentanoate + H2O. Its pathway is amino-acid biosynthesis; L-isoleucine biosynthesis; L-isoleucine from 2-oxobutanoate: step 3/4. It participates in amino-acid biosynthesis; L-valine biosynthesis; L-valine from pyruvate: step 3/4. Functionally, functions in the biosynthesis of branched-chain amino acids. Catalyzes the dehydration of (2R,3R)-2,3-dihydroxy-3-methylpentanoate (2,3-dihydroxy-3-methylvalerate) into 2-oxo-3-methylpentanoate (2-oxo-3-methylvalerate) and of (2R)-2,3-dihydroxy-3-methylbutanoate (2,3-dihydroxyisovalerate) into 2-oxo-3-methylbutanoate (2-oxoisovalerate), the penultimate precursor to L-isoleucine and L-valine, respectively. The protein is Dihydroxy-acid dehydratase 1 of Bordetella bronchiseptica (strain ATCC BAA-588 / NCTC 13252 / RB50) (Alcaligenes bronchisepticus).